Here is a 369-residue protein sequence, read N- to C-terminus: Chaperone protein DnaJ (369 aa).

The region spanning 7-73 is the J domain; sequence DYYEILGVPR…QKRAMYDRFG (67 aa). The CR-type zinc-finger motif lies at 143-225; that stretch reads GAEIPVEYER…CGGSGRVLRK (83 aa). The Zn(2+) site is built by C156, C159, C173, C176, C199, C202, C213, and C216. 4 CXXCXGXG motif repeats span residues 156–163, 173–180, 199–206, and 213–220; these read CPRCGGTG, CPSCGGTG, CERCGGTG, and CHECGGSG.

Belongs to the DnaJ family. Homodimer. Zn(2+) is required as a cofactor.

The protein localises to the cytoplasm. Functionally, participates actively in the response to hyperosmotic and heat shock by preventing the aggregation of stress-denatured proteins and by disaggregating proteins, also in an autonomous, DnaK-independent fashion. Unfolded proteins bind initially to DnaJ; upon interaction with the DnaJ-bound protein, DnaK hydrolyzes its bound ATP, resulting in the formation of a stable complex. GrpE releases ADP from DnaK; ATP binding to DnaK triggers the release of the substrate protein, thus completing the reaction cycle. Several rounds of ATP-dependent interactions between DnaJ, DnaK and GrpE are required for fully efficient folding. Also involved, together with DnaK and GrpE, in the DNA replication of plasmids through activation of initiation proteins. The polypeptide is Chaperone protein DnaJ (Thermotoga maritima (strain ATCC 43589 / DSM 3109 / JCM 10099 / NBRC 100826 / MSB8)).